Reading from the N-terminus, the 229-residue chain is Cytidylate kinase (229 aa).

ATP is bound at residue 12–20 (GPSGVGKST).

This sequence belongs to the cytidylate kinase family. Type 1 subfamily.

The protein localises to the cytoplasm. The catalysed reaction is CMP + ATP = CDP + ADP. It carries out the reaction dCMP + ATP = dCDP + ADP. The chain is Cytidylate kinase from Mesomycoplasma hyopneumoniae (strain 7448) (Mycoplasma hyopneumoniae).